The following is a 173-amino-acid chain: Peptide methionine sulfoxide reductase MsrA (173 aa).

Cysteine 10 is a catalytic residue.

This sequence belongs to the MsrA Met sulfoxide reductase family.

The catalysed reaction is L-methionyl-[protein] + [thioredoxin]-disulfide + H2O = L-methionyl-(S)-S-oxide-[protein] + [thioredoxin]-dithiol. It catalyses the reaction [thioredoxin]-disulfide + L-methionine + H2O = L-methionine (S)-S-oxide + [thioredoxin]-dithiol. Its function is as follows. Has an important function as a repair enzyme for proteins that have been inactivated by oxidation. Catalyzes the reversible oxidation-reduction of methionine sulfoxide in proteins to methionine. In Psychrobacter cryohalolentis (strain ATCC BAA-1226 / DSM 17306 / VKM B-2378 / K5), this protein is Peptide methionine sulfoxide reductase MsrA.